We begin with the raw amino-acid sequence, 414 residues long: Alanine--glyoxylate aminotransferase (414 aa).

A mitochondrion-targeting transit peptide spans 1–23 (MFRMLAKASVTLGSRAAGWVRTM). K231 is modified (N6-(pyridoxal phosphate)lysine). Position 247 is an N6-acetyllysine; alternate (K247). The residue at position 247 (K247) is an N6-succinyllysine; alternate. Position 256 is an N6-acetyllysine (K256). Residue K330 is modified to N6-acetyllysine; alternate. An N6-succinyllysine; alternate modification is found at K330. At K334 the chain carries N6-acetyllysine. R382 contacts substrate. Residues 412 to 414 (NKL) carry the Microbody targeting signal motif.

The protein belongs to the class-V pyridoxal-phosphate-dependent aminotransferase family. In terms of assembly, homodimer. Pyridoxal 5'-phosphate is required as a cofactor.

The protein localises to the peroxisome. The protein resides in the mitochondrion matrix. The catalysed reaction is L-serine + pyruvate = 3-hydroxypyruvate + L-alanine. It catalyses the reaction glyoxylate + L-alanine = glycine + pyruvate. In terms of biological role, catalyzes the transamination of glyoxylate to glycine and contributes to the glyoxylate detoxification. Functionally, catalyzes the transamination between L-serine and pyruvate and weakly contributes to gluconeogenesis from the L-serine metabolism. In Mus musculus (Mouse), this protein is Alanine--glyoxylate aminotransferase.